Consider the following 226-residue polypeptide: MSNGKIYQKIDLSNVDRKKIKDDHESVVVHNEIKHTKELWTFPRRSDWGTSGVRCYWDHHEFDGTPIYCPVSYRPRQVAKISKNEIKPTCRNQSIVDVSTFTIKENIPKSKDVSNLLEKDLIKITDPYYEVDGVFCSPECCVAWIRNEKTKAGGSMYSDSERLLHSMLGLVQKITPANNFRLLKSYGGNLTIDQFRKNNKCIKYEYYGTTVLISHLFEKKINLSSD.

It belongs to the IIV-6 350L family.

This is an uncharacterized protein from Invertebrate iridescent virus 3 (IIV-3).